Reading from the N-terminus, the 244-residue chain is Phosphoadenosine 5'-phosphosulfate reductase (244 aa).

Cysteine 239 acts as the Nucleophile; cysteine thiosulfonate intermediate in catalysis.

Belongs to the PAPS reductase family. CysH subfamily.

It is found in the cytoplasm. The catalysed reaction is [thioredoxin]-disulfide + sulfite + adenosine 3',5'-bisphosphate + 2 H(+) = [thioredoxin]-dithiol + 3'-phosphoadenylyl sulfate. Its pathway is sulfur metabolism; hydrogen sulfide biosynthesis; sulfite from sulfate: step 3/3. Its function is as follows. Catalyzes the formation of sulfite from phosphoadenosine 5'-phosphosulfate (PAPS) using thioredoxin as an electron donor. The chain is Phosphoadenosine 5'-phosphosulfate reductase from Salmonella typhi.